The primary structure comprises 342 residues: Methylthioribose-1-phosphate isomerase (342 aa).

Residues 44–46, Arg-85, and Gln-192 each bind substrate; that span reads RGA. Residue Asp-233 is the Proton donor of the active site. 243-244 contacts substrate; sequence NK.

This sequence belongs to the eIF-2B alpha/beta/delta subunits family. MtnA subfamily.

The enzyme catalyses 5-(methylsulfanyl)-alpha-D-ribose 1-phosphate = 5-(methylsulfanyl)-D-ribulose 1-phosphate. Its pathway is amino-acid biosynthesis; L-methionine biosynthesis via salvage pathway; L-methionine from S-methyl-5-thio-alpha-D-ribose 1-phosphate: step 1/6. Functionally, catalyzes the interconversion of methylthioribose-1-phosphate (MTR-1-P) into methylthioribulose-1-phosphate (MTRu-1-P). This is Methylthioribose-1-phosphate isomerase from Caldicellulosiruptor saccharolyticus (strain ATCC 43494 / DSM 8903 / Tp8T 6331).